Consider the following 215-residue polypeptide: SAGA complex/transcription factor TFIID complex subunit Taf10 (215 aa).

Positions 1–77 (MSDINNNEPA…SRERHGSNYV (77 aa)) are disordered. Over residues 23–42 (GNNSMSVDEQPETSSTNLPT) the composition is skewed to polar residues. A compositionally biased stretch (basic and acidic residues) spans 58–73 (NNEDSPKSDDSRERHG). Positions 58–203 (NNEDSPKSDD…VDDLSAALNE (146 aa)) constitute a Histone-fold domain.

Belongs to the TAF10 family. Component of the 1.8 MDa SAGA (Spt-Ada-Gcn5 acetyltransferase) complex, which is composed of 19 subunits tra1, spt7, taf5, ngg1/ada3, sgf73, spt20, spt8, taf12, taf6, hfi1/ada1, ubp8, gcn5, ada2, spt3, sgf29, taf10, taf9, sgf11 and sus1. The SAGA complex is composed of 4 modules, namely the HAT (histone acetyltransferase) module (gcn5, ada2, ngg1/ada3 and sgf29), the DUB (deubiquitinating) module (ubp8, sgf11, sgf73 and sus1), the core or TAF (TBP-associated factor) module (taf5, taf6, taf9, taf10 and taf12), and the Tra1 or SPT (Suppressor of Ty) module (tra1, hfi1/ada1, spt3, spt7, spt8 and spt20). The Tra1/SPT module binds activators, the core module recruits TBP (TATA-binding protein), the HAT module contains the histone H3 acetyltransferase gcn5, and the DUB module comprises the histone H2B deubiquitinase ubp8. Component of the 1.2 MDa TFIID complex, which is composed of TATA-binding protein (TBP) and the 14 TBP-associated factors (TAFs). It comprises 1 copy of each taf1, taf2, taf3, taf7, taf8, taf11, taf13, 2 copies of each taf4, taf5, taf6, taf9, taf10, taf12, and 3 copies of taf14. In TFIID, taf10 heterodimerizes with taf3 and taf8.

It is found in the nucleus. Its function is as follows. Functions as a component of both the DNA-binding general transcription initiation factor complex TFIID and the transcription coactivator SAGA complex. Binding of TFIID to a promoter (with or without TATA element) is the initial step in pre-initiation complex (PIC) formation. TFIID plays a key role in the regulation of gene expression by RNA polymerase II through different activities such as transcription activator interaction, core promoter recognition and selectivity, TFIIA and TFIIB interaction, chromatin modification (histone acetylation by TAF1), facilitation of DNA opening and initiation of transcription. SAGA acts as a general cofactor required for essentially all RNA polymerase II transcription. At the promoters, SAGA is required for transcription pre-initiation complex (PIC) recruitment. It influences RNA polymerase II transcriptional activity through different activities such as TBP interaction (via core/TAF module) and promoter selectivity, interaction with transcription activators (via Tra1/SPT module), and chromatin modification through histone acetylation (via HAT module) and deubiquitination (via DUB module). SAGA preferentially acetylates histones H3 (to form H3K9ac, H3K14ac, H3K18ac and H3K23ac) and H2B and deubiquitinates histone H2B. SAGA interacts with DNA via upstream activating sequences (UASs). This is SAGA complex/transcription factor TFIID complex subunit Taf10 from Schizosaccharomyces pombe (strain 972 / ATCC 24843) (Fission yeast).